Here is a 151-residue protein sequence, read N- to C-terminus: Methylglyoxal synthase (151 aa).

The MGS-like domain maps to 1–151 (MKKTTRTMAA…DYQAYLAERT (151 aa)). Residues histidine 19, lysine 23, 45-48 (TGTT), and 65-66 (SG) contribute to the substrate site. Aspartate 71 (proton donor/acceptor) is an active-site residue. Histidine 98 provides a ligand contact to substrate.

Belongs to the methylglyoxal synthase family.

It catalyses the reaction dihydroxyacetone phosphate = methylglyoxal + phosphate. Functionally, catalyzes the formation of methylglyoxal from dihydroxyacetone phosphate. The protein is Methylglyoxal synthase of Vibrio cholerae serotype O1 (strain ATCC 39541 / Classical Ogawa 395 / O395).